We begin with the raw amino-acid sequence, 666 residues long: Endogenous retrovirus group K member 7 Gag polyprotein (666 aa).

Gly-2 carries N-myristoyl glycine lipidation. Disordered regions lie at residues 165 to 205 (GKGP…NKTQ) and 217 to 264 (ELQY…GSEL). Pro residues predominate over residues 232 to 247 (GMPPAPQGRAPYPQPP). 2 CCHC-type zinc fingers span residues 544 to 561 (GKCY…NCPV) and 580 to 597 (DLCP…QCRS). Positions 598 to 641 (KFDKNGQPLSGNEQRGQPQAPQQTGAFPIQPFVPQGFQEQQPPL) are disordered. Residues 604–622 (QPLSGNEQRGQPQAPQQTG) are compositionally biased toward polar residues.

This sequence belongs to the beta type-B retroviral Gag protein family. HERV class-II K(HML-2) gag subfamily. Specific enzymatic cleavages may yield mature proteins. In terms of processing, myristoylation is essential for retroviral assembly. Alteration of the glycine residue leads to a block in the budding of particles and an accumulation of Gag inside the cell.

It is found in the cell membrane. In terms of biological role, the products of the Gag polyproteins of infectious retroviruses perform highly complex orchestrated tasks during the assembly, budding, maturation, and infection stages of the viral replication cycle. During viral assembly, the proteins form membrane associations and self-associations that ultimately result in budding of an immature virion from the infected cell. Gag precursors also function during viral assembly to selectively bind and package two plus strands of genomic RNA. Endogenous Gag proteins may have kept, lost or modified their original function during evolution. The sequence is that of Endogenous retrovirus group K member 7 Gag polyprotein (ERVK-7) from Homo sapiens (Human).